Here is a 662-residue protein sequence, read N- to C-terminus: 72 kDa type IV collagenase (662 aa).

A signal peptide spans 1-29 (MEALGARGALAGFLRALCVLGCLLGRATA). Positions 30 to 109 (PPSPVIKFPG…PRCGNPDVAN (80 aa)) are cleaved as a propeptide — activation peptide. The Cysteine switch signature appears at 100–107 (PRCGNPDV). Residue Cys102 participates in Zn(2+) binding. Positions 110-221 (YNFFPRKPKW…LWTLGEGQVV (112 aa)) are collagenase-like 1. Ca(2+)-binding residues include Asp134 and Asp168. Residues His178 and Asp180 each coordinate Zn(2+). Ca(2+) is bound by residues Asp185 and Gly186. Zn(2+) is bound at residue His193. 3 residues coordinate Ca(2+): Gly200, Gly202, and Asp204. A Zn(2+)-binding site is contributed by His206. Residues Asp208, Asp209, and Glu211 each coordinate Ca(2+). The collagen-binding stretch occupies residues 222–396 (RVKYGNADGE…WGFCPDQGYS (175 aa)). Fibronectin type-II domains are found at residues 228-276 (ADGE…FCPH), 286-334 (ADGQ…FCPE), and 344-392 (SEGA…FCPD). 6 disulfide bridges follow: Cys233–Cys259, Cys247–Cys274, Cys291–Cys317, Cys305–Cys332, Cys349–Cys375, and Cys363–Cys390. Residues 397–467 (LFLVAAHEFG…GPTPTLGPVT (71 aa)) are collagenase-like 2. His403 is a binding site for Zn(2+). The active site involves Glu404. Positions 407 and 413 each coordinate Zn(2+). The segment at 414–662 (SQDPGALMAP…GSIKTDWLGC (249 aa)) is required for inhibitor TIMP2 binding. Cys471 and Cys662 are joined by a disulfide. Hemopexin repeat units lie at residues 474-518 (DIVF…WPEL), 519-565 (PEKI…GLPP), 567-615 (VQRV…WNAI), and 616-662 (PDHL…WLGC). Ca(2+) contacts are provided by Asp478, Asp523, and Asp571. A glycan (N-linked (GlcNAc...) asparagine) is linked at Asn575. A Ca(2+)-binding site is contributed by Asp620. A glycan (N-linked (GlcNAc...) asparagine) is linked at Asn644.

It belongs to the peptidase M10A family. As to quaternary structure, interacts (via the C-terminal hemopexin-like domains-containing region) with the integrin alpha-V/beta-3; the interaction promotes vascular invasion in angiogenic vessels and melamoma cells. Interacts (via the C-terminal PEX domain) with TIMP2 (via the C-terminal); the interaction inhibits the degradation activity. Interacts with GSK3B. Requires Ca(2+) as cofactor. Zn(2+) is required as a cofactor. Post-translationally, phosphorylation on multiple sites modulates enzymatic activity. Phosphorylated by PKC in vitro. The propeptide is processed by MMP14 (MT-MMP1) and MMP16 (MT-MMP3). Autocatalytic cleavage in the C-terminal produces the anti-angiogenic peptide, PEX. This processing appears to be facilitated by binding integrinv/beta3.

The protein localises to the secreted. Its subcellular location is the extracellular space. It localises to the extracellular matrix. It is found in the membrane. The protein resides in the nucleus. It catalyses the reaction Cleavage of gelatin type I and collagen types IV, V, VII, X. Cleaves the collagen-like sequence Pro-Gln-Gly-|-Ile-Ala-Gly-Gln.. In terms of biological role, ubiquitinous metalloproteinase that is involved in diverse functions such as remodeling of the vasculature, angiogenesis, tissue repair, tumor invasion, inflammation, and atherosclerotic plaque rupture. As well as degrading extracellular matrix proteins, can also act on several nonmatrix proteins such as big endothelial 1 and beta-type CGRP promoting vasoconstriction. Also cleaves KISS at a Gly-|-Leu bond. Appears to have a role in myocardial cell death pathways. Contributes to myocardial oxidative stress by regulating the activity of GSK3beta. Cleaves GSK3beta in vitro. Involved in the formation of the fibrovascular tissues. PEX, the C-terminal non-catalytic fragment of MMP2, possesses anti-angiogenic and anti-tumor properties and inhibits cell migration and cell adhesion to FGF2 and vitronectin. Ligand for integrin alpha-v/beta-3 on the surface of blood vessels. This is 72 kDa type IV collagenase (MMP2) from Oryctolagus cuniculus (Rabbit).